The chain runs to 366 residues: Chorismate synthase (366 aa).

Arginine 48 and arginine 54 together coordinate NADP(+). Residues 125-127, 238-239, glycine 278, 293-297, and arginine 319 contribute to the FMN site; these read RSS, NA, and KPTSS.

It belongs to the chorismate synthase family. As to quaternary structure, homotetramer. Requires FMNH2 as cofactor.

It catalyses the reaction 5-O-(1-carboxyvinyl)-3-phosphoshikimate = chorismate + phosphate. It functions in the pathway metabolic intermediate biosynthesis; chorismate biosynthesis; chorismate from D-erythrose 4-phosphate and phosphoenolpyruvate: step 7/7. Its function is as follows. Catalyzes the anti-1,4-elimination of the C-3 phosphate and the C-6 proR hydrogen from 5-enolpyruvylshikimate-3-phosphate (EPSP) to yield chorismate, which is the branch point compound that serves as the starting substrate for the three terminal pathways of aromatic amino acid biosynthesis. This reaction introduces a second double bond into the aromatic ring system. This is Chorismate synthase from Burkholderia ambifaria (strain MC40-6).